Here is a 192-residue protein sequence, read N- to C-terminus: Peptidyl-tRNA hydrolase (192 aa).

TRNA is bound at residue His-17. Residue His-22 is the Proton acceptor of the active site. Residues Phe-68, Asn-70, and Asn-116 each contribute to the tRNA site.

This sequence belongs to the PTH family. As to quaternary structure, monomer.

It localises to the cytoplasm. It carries out the reaction an N-acyl-L-alpha-aminoacyl-tRNA + H2O = an N-acyl-L-amino acid + a tRNA + H(+). In terms of biological role, hydrolyzes ribosome-free peptidyl-tRNAs (with 1 or more amino acids incorporated), which drop off the ribosome during protein synthesis, or as a result of ribosome stalling. Its function is as follows. Catalyzes the release of premature peptidyl moieties from peptidyl-tRNA molecules trapped in stalled 50S ribosomal subunits, and thus maintains levels of free tRNAs and 50S ribosomes. This Stenotrophomonas maltophilia (strain K279a) protein is Peptidyl-tRNA hydrolase.